The primary structure comprises 469 residues: Gustatory receptor for sugar taste 64f (469 aa).

Topologically, residues 1–117 are cytoplasmic; the sequence is MKILPKLERK…SFSWRNIRTC (117 aa). A helical transmembrane segment spans residues 118 to 138; the sequence is FSLLFIASSLANFGLSLFKVL. At 139–146 the chain is on the extracellular side; the sequence is NNPISFNS. A helical transmembrane segment spans residues 147–167; that stretch reads IKPIIFRGSVLLVLIVALNLA. The Cytoplasmic segment spans residues 168–199; sequence RQWPQLMMYWHTVEKDLPQYKTQLTKWKMGHT. A helical transmembrane segment spans residues 200 to 220; sequence ISMVMLLGMMLSFAEHILSMV. Residues 221–265 are Extracellular-facing; it reads SAINYASFCNRTADPIQNYFLRTNDEIFFVTSYSTTLALWGKFQN. Asparagine 230 carries N-linked (GlcNAc...) asparagine glycosylation. Residues 266–286 traverse the membrane as a helical segment; it reads VFSTFIWNYMDLFVMIVSIGL. The Cytoplasmic segment spans residues 287–330; that stretch reads ASKFRQLNDDLRNFKGMNMAPSYWSERRIQYRNICILCDKMDDA. The helical transmembrane segment at 331 to 351 threads the bilayer; sequence ISLITMVSFSNNLYFICVQLL. Residues 352–353 are Extracellular-facing; that stretch reads RS. Residues 354-374 traverse the membrane as a helical segment; that stretch reads LNTMPSVAHAVYFYFSLIFLI. Over 375–435 the chain is Cytoplasmic; that stretch reads GRTLAVSLYS…GMKFFHLTRK (61 aa). The helical transmembrane segment at 436–456 threads the bilayer; the sequence is LVLSVAGTIVTYELVLIQFHE. Topologically, residues 457-469 are extracellular; sequence DNDLWDCDQSYYS.

The protein belongs to the insect chemoreceptor superfamily. Gustatory receptor (GR) family. Gr5a subfamily. In terms of tissue distribution, expressed in Gr5a-expressing sugar-sensing cells.

It is found in the cell membrane. One of the few identified sugar gustatory receptors identified so far and which promotes the starvation-induced increase of feeding motivation. Required in combination with Gr64a to detect sucrose, maltose, and glucose. The chain is Gustatory receptor for sugar taste 64f (Gr64f) from Drosophila melanogaster (Fruit fly).